A 376-amino-acid chain; its full sequence is Succinyl-diaminopimelate desuccinylase (376 aa).

Position 67 (His67) interacts with Zn(2+). The active site involves Asp69. Asp100 contributes to the Zn(2+) binding site. The active-site Proton acceptor is the Glu134. Zn(2+) contacts are provided by Glu135, Glu163, and His349.

This sequence belongs to the peptidase M20A family. DapE subfamily. Homodimer. Requires Zn(2+) as cofactor. Co(2+) is required as a cofactor.

It catalyses the reaction N-succinyl-(2S,6S)-2,6-diaminopimelate + H2O = (2S,6S)-2,6-diaminopimelate + succinate. It participates in amino-acid biosynthesis; L-lysine biosynthesis via DAP pathway; LL-2,6-diaminopimelate from (S)-tetrahydrodipicolinate (succinylase route): step 3/3. Functionally, catalyzes the hydrolysis of N-succinyl-L,L-diaminopimelic acid (SDAP), forming succinate and LL-2,6-diaminopimelate (DAP), an intermediate involved in the bacterial biosynthesis of lysine and meso-diaminopimelic acid, an essential component of bacterial cell walls. The protein is Succinyl-diaminopimelate desuccinylase of Actinobacillus succinogenes (strain ATCC 55618 / DSM 22257 / CCUG 43843 / 130Z).